Reading from the N-terminus, the 118-residue chain is Probable mitochondrial pyruvate carrier 2 (118 aa).

3 helical membrane-spanning segments follow: residues 19-35, 50-66, and 72-94; these read VHFWAPAMKWTLVLSGI, YAALCATGAIWTRWSLI, and YFNATVNFFLAIVGAVQVSRILV.

The protein belongs to the mitochondrial pyruvate carrier (MPC) (TC 2.A.105) family. As to quaternary structure, the functional 150 kDa pyruvate import complex is a heteromer of mpc1 and mpc2.

The protein resides in the mitochondrion inner membrane. Its function is as follows. Mediates the uptake of pyruvate into mitochondria. This Schizosaccharomyces pombe (strain 972 / ATCC 24843) (Fission yeast) protein is Probable mitochondrial pyruvate carrier 2.